We begin with the raw amino-acid sequence, 524 residues long: Cytochrome P450 1A1 (524 aa).

The interval 33-44 (WQPRLPKGLKSP) is mitochondrial targeting signal. The O-linked (GlcNAc) serine glycan is linked to serine 71. Phenylalanine 228 is a binding site for substrate. Residue cysteine 461 participates in heme binding.

The protein belongs to the cytochrome P450 family. Interacts with cytosolic chaperones HSP70 and HSP90; this interaction is required for initial targeting to mitochondria. Interacts (via mitochondrial targeting signal) with TOMM40 (via N-terminus); this interaction is required for translocation across the mitochondrial outer membrane. Heme is required as a cofactor.

It localises to the endoplasmic reticulum membrane. The protein resides in the mitochondrion inner membrane. It is found in the microsome membrane. Its subcellular location is the cytoplasm. The enzyme catalyses an organic molecule + reduced [NADPH--hemoprotein reductase] + O2 = an alcohol + oxidized [NADPH--hemoprotein reductase] + H2O + H(+). It catalyses the reaction estrone + reduced [NADPH--hemoprotein reductase] + O2 = 2-hydroxyestrone + oxidized [NADPH--hemoprotein reductase] + H2O + H(+). It carries out the reaction estrone + reduced [NADPH--hemoprotein reductase] + O2 = 4-hydroxyestrone + oxidized [NADPH--hemoprotein reductase] + H2O + H(+). The catalysed reaction is estrone + reduced [NADPH--hemoprotein reductase] + O2 = 6alpha-hydroxyestrone + oxidized [NADPH--hemoprotein reductase] + H2O + H(+). The enzyme catalyses estrone + reduced [NADPH--hemoprotein reductase] + O2 = 15alpha-hydroxyestrone + oxidized [NADPH--hemoprotein reductase] + H2O + H(+). It catalyses the reaction estrone + reduced [NADPH--hemoprotein reductase] + O2 = 16alpha-hydroxyestrone + oxidized [NADPH--hemoprotein reductase] + H2O + H(+). It carries out the reaction 17beta-estradiol + reduced [NADPH--hemoprotein reductase] + O2 = 2-hydroxy-17beta-estradiol + oxidized [NADPH--hemoprotein reductase] + H2O + H(+). The catalysed reaction is 17beta-estradiol + reduced [NADPH--hemoprotein reductase] + O2 = 4-hydroxy-17beta-estradiol + oxidized [NADPH--hemoprotein reductase] + H2O + H(+). The enzyme catalyses 17beta-estradiol + reduced [NADPH--hemoprotein reductase] + O2 = 6alpha-hydroxy-17beta-estradiol + oxidized [NADPH--hemoprotein reductase] + H2O + H(+). It catalyses the reaction 17beta-estradiol + reduced [NADPH--hemoprotein reductase] + O2 = 7alpha-hydroxy-17beta-estradiol + oxidized [NADPH--hemoprotein reductase] + H2O + H(+). It carries out the reaction 17beta-estradiol + reduced [NADPH--hemoprotein reductase] + O2 = 15alpha-hydroxy-17beta-estradiol + oxidized [NADPH--hemoprotein reductase] + H2O + H(+). The catalysed reaction is (5Z,8Z,11Z)-eicosatrienoate + reduced [NADPH--hemoprotein reductase] + O2 = 19-hydroxy-(5Z,8Z,11Z)-eicosatrienoate + oxidized [NADPH--hemoprotein reductase] + H2O + H(+). The enzyme catalyses (5Z,8Z,11Z,14Z)-eicosatetraenoate + reduced [NADPH--hemoprotein reductase] + O2 = 16-hydroxy-(5Z,8Z,11Z,14Z)-eicosatetraenoate + oxidized [NADPH--hemoprotein reductase] + H2O + H(+). It catalyses the reaction (5Z,8Z,11Z,14Z)-eicosatetraenoate + reduced [NADPH--hemoprotein reductase] + O2 = 17-hydroxy-(5Z,8Z,11Z,14Z)-eicosatetraenoate + oxidized [NADPH--hemoprotein reductase] + H2O + H(+). It carries out the reaction (5Z,8Z,11Z,14Z)-eicosatetraenoate + reduced [NADPH--hemoprotein reductase] + O2 = 18-hydroxy-(5Z,8Z,11Z,14Z)-eicosatetraenoate + oxidized [NADPH--hemoprotein reductase] + H2O + H(+). The catalysed reaction is (5Z,8Z,11Z,14Z)-eicosatetraenoate + reduced [NADPH--hemoprotein reductase] + O2 = 19-hydroxy-(5Z,8Z,11Z,14Z)-eicosatetraenoate + oxidized [NADPH--hemoprotein reductase] + H2O + H(+). The enzyme catalyses (5Z,8Z,11Z,14Z,17Z)-eicosapentaenoate + reduced [NADPH--hemoprotein reductase] + O2 = 19-hydroxy-(5Z,8Z,11Z,14Z,17Z)-eicosapentaenoate + oxidized [NADPH--hemoprotein reductase] + H2O + H(+). It catalyses the reaction (5Z,8Z,11Z,14Z)-eicosatetraenoate + reduced [NADPH--hemoprotein reductase] + O2 = (8R,9S)-epoxy-(5Z,11Z,14Z)-eicosatrienoate + oxidized [NADPH--hemoprotein reductase] + H2O + H(+). It carries out the reaction (5Z,8Z,11Z,14Z)-eicosatetraenoate + reduced [NADPH--hemoprotein reductase] + O2 = (11R,12S)-epoxy-(5Z,8Z,14Z)-eicosatrienoate + oxidized [NADPH--hemoprotein reductase] + H2O + H(+). The catalysed reaction is (5Z,8Z,11Z,14Z)-eicosatetraenoate + reduced [NADPH--hemoprotein reductase] + O2 = (14S,15R)-epoxy-(5Z,8Z,11Z)-eicosatrienoate + oxidized [NADPH--hemoprotein reductase] + H2O + H(+). The enzyme catalyses (5Z,8Z,11Z,14Z)-eicosatetraenoate + reduced [NADPH--hemoprotein reductase] + O2 = (14R,15S)-epoxy-(5Z,8Z,11Z)-eicosatrienoate + oxidized [NADPH--hemoprotein reductase] + H2O + H(+). It catalyses the reaction (5Z,8Z,11Z,14Z,17Z)-eicosapentaenoate + reduced [NADPH--hemoprotein reductase] + O2 = (17R,18S)-epoxy-(5Z,8Z,11Z,14Z)-eicosatetraenoate + oxidized [NADPH--hemoprotein reductase] + H2O + H(+). It carries out the reaction (4Z,7Z,10Z,13Z,16Z,19Z)-docosahexaenoate + reduced [NADPH--hemoprotein reductase] + O2 = (19S,20R)-epoxy-(4Z,7Z,10Z,13Z,16Z)-docosapentaenoate + oxidized [NADPH--hemoprotein reductase] + H2O + H(+). The catalysed reaction is (4Z,7Z,10Z,13Z,16Z,19Z)-docosahexaenoate + reduced [NADPH--hemoprotein reductase] + O2 = (19R,20S)-epoxy-(4Z,7Z,10Z,13Z,16Z)-docosapentaenoate + oxidized [NADPH--hemoprotein reductase] + H2O + H(+). The enzyme catalyses all-trans-retinol + reduced [NADPH--hemoprotein reductase] + O2 = all-trans-retinal + oxidized [NADPH--hemoprotein reductase] + 2 H2O + H(+). It catalyses the reaction all-trans-retinal + reduced [NADPH--hemoprotein reductase] + O2 = all-trans-retinoate + oxidized [NADPH--hemoprotein reductase] + H2O + 2 H(+). It carries out the reaction (13S)-hydroperoxy-(9Z,11E)-octadecadienoate = 13-oxo-(9Z,11E)-octadecadienoate + H2O. The catalysed reaction is (12S)-hydroperoxy-(5Z,8Z,10E,14Z)-eicosatetraenoate = 12-oxo-(5Z,8Z,10E,14Z)-eicosatetraenoate + H2O. The enzyme catalyses (15S)-hydroperoxy-(5Z,8Z,11Z,13E)-eicosatetraenoate = 15-oxo-(5Z,8Z,11Z,13E)-eicosatetraenoate + H2O. It catalyses the reaction (5S)-hydroperoxy-(6E,8Z,11Z,14Z)-eicosatetraenoate = 5-oxo-(6E,8Z,11Z,14Z)-eicosatetraenoate + H2O. It functions in the pathway steroid hormone biosynthesis. The protein operates within lipid metabolism; fatty acid metabolism. Its pathway is cofactor metabolism; retinol metabolism. In terms of biological role, a cytochrome P450 monooxygenase involved in the metabolism of various endogenous substrates, including fatty acids, steroid hormones and vitamins. Mechanistically, uses molecular oxygen inserting one oxygen atom into a substrate, and reducing the second into a water molecule, with two electrons provided by NADPH via cytochrome P450 reductase (CPR; NADPH-ferrihemoprotein reductase). Catalyzes the hydroxylation of carbon-hydrogen bonds. Exhibits high catalytic activity for the formation of hydroxyestrogens from estrone (E1) and 17beta-estradiol (E2), namely 2-hydroxy E1 and E2, as well as D-ring hydroxylated E1 and E2 at the C15alpha and C16alpha positions. Displays different regioselectivities for polyunsaturated fatty acids (PUFA) hydroxylation. Catalyzes the epoxidation of double bonds of certain PUFA. Converts arachidonic acid toward epoxyeicosatrienoic acid (EET) regioisomers, 8,9-, 11,12-, and 14,15-EET, that function as lipid mediators in the vascular system. Displays an absolute stereoselectivity in the epoxidation of eicosapentaenoic acid (EPA) producing the 17(R),18(S) enantiomer. May play an important role in all-trans retinoic acid biosynthesis in extrahepatic tissues. Catalyzes two successive oxidative transformation of all-trans retinol to all-trans retinal and then to the active form all-trans retinoic acid. May also participate in eicosanoids metabolism by converting hydroperoxide species into oxo metabolites (lipoxygenase-like reaction, NADPH-independent). The sequence is that of Cytochrome P450 1A1 (CYP1A1) from Canis lupus familiaris (Dog).